Here is a 114-residue protein sequence, read N- to C-terminus: Hydrogenase maturation factor HypA (114 aa).

His-2 is a Ni(2+) binding site. Residues Cys-73, Cys-76, Cys-89, and Cys-92 each coordinate Zn(2+).

The protein belongs to the HypA/HybF family.

Functionally, involved in the maturation of [NiFe] hydrogenases. Required for nickel insertion into the metal center of the hydrogenase. The polypeptide is Hydrogenase maturation factor HypA (Azoarcus sp. (strain BH72)).